Here is a 427-residue protein sequence, read N- to C-terminus: 3-phosphoshikimate 1-carboxyvinyltransferase (427 aa).

3-phosphoshikimate is bound by residues K20, S21, and R25. A phosphoenolpyruvate-binding site is contributed by K20. Residues G92 and R120 each coordinate phosphoenolpyruvate. S166, Q168, D312, and K339 together coordinate 3-phosphoshikimate. Q168 serves as a coordination point for phosphoenolpyruvate. D312 acts as the Proton acceptor in catalysis. The phosphoenolpyruvate site is built by R343 and R385.

It belongs to the EPSP synthase family. In terms of assembly, monomer.

Its subcellular location is the cytoplasm. The catalysed reaction is 3-phosphoshikimate + phosphoenolpyruvate = 5-O-(1-carboxyvinyl)-3-phosphoshikimate + phosphate. It participates in metabolic intermediate biosynthesis; chorismate biosynthesis; chorismate from D-erythrose 4-phosphate and phosphoenolpyruvate: step 6/7. Its function is as follows. Catalyzes the transfer of the enolpyruvyl moiety of phosphoenolpyruvate (PEP) to the 5-hydroxyl of shikimate-3-phosphate (S3P) to produce enolpyruvyl shikimate-3-phosphate and inorganic phosphate. The polypeptide is 3-phosphoshikimate 1-carboxyvinyltransferase (Streptococcus pyogenes serotype M4 (strain MGAS10750)).